A 401-amino-acid chain; its full sequence is Protein-glutamate methylesterase/protein-glutamine glutaminase (401 aa).

The Response regulatory domain occupies 16 to 134; that stretch reads RVLVIDDSAV…LAGAEEFRRD (119 aa). A 4-aspartylphosphate modification is found at D67. Residues 146–208 form a disordered region; that stretch reads PIPPVPTQRD…PQGRGTPRNT (63 aa). Composition is skewed to low complexity over residues 166-176 and 185-199; these read AAPGAPVARSI and SAPAKKAFAPVAQPP. Residues 205–400 enclose the CheB-type methylesterase domain; it reads PRNTARPEII…PGIVRRAKGG (196 aa). Residues S219, H246, and D342 contribute to the active site.

It belongs to the CheB family. Post-translationally, phosphorylated by CheA. Phosphorylation of the N-terminal regulatory domain activates the methylesterase activity.

It localises to the cytoplasm. The catalysed reaction is [protein]-L-glutamate 5-O-methyl ester + H2O = L-glutamyl-[protein] + methanol + H(+). It carries out the reaction L-glutaminyl-[protein] + H2O = L-glutamyl-[protein] + NH4(+). Its function is as follows. Involved in chemotaxis. Part of a chemotaxis signal transduction system that modulates chemotaxis in response to various stimuli. Catalyzes the demethylation of specific methylglutamate residues introduced into the chemoreceptors (methyl-accepting chemotaxis proteins or MCP) by CheR. Also mediates the irreversible deamidation of specific glutamine residues to glutamic acid. In Maricaulis maris (strain MCS10) (Caulobacter maris), this protein is Protein-glutamate methylesterase/protein-glutamine glutaminase.